A 399-amino-acid polypeptide reads, in one-letter code: Homoserine O-acetyltransferase (399 aa).

The 310-residue stretch at 63 to 372 folds into the AB hydrolase-1 domain; that stretch reads NAILVCHALT…TDRGHDAFLL (310 aa). The active-site Nucleophile is the S168. A substrate-binding site is contributed by R238. Active-site residues include D334 and H367. D368 is a binding site for substrate.

The protein belongs to the AB hydrolase superfamily. MetX family. In terms of assembly, homodimer.

The protein resides in the cytoplasm. It catalyses the reaction L-homoserine + acetyl-CoA = O-acetyl-L-homoserine + CoA. It participates in amino-acid biosynthesis; L-methionine biosynthesis via de novo pathway; O-acetyl-L-homoserine from L-homoserine: step 1/1. Functionally, transfers an acetyl group from acetyl-CoA to L-homoserine, forming acetyl-L-homoserine. The chain is Homoserine O-acetyltransferase from Nitrobacter hamburgensis (strain DSM 10229 / NCIMB 13809 / X14).